The primary structure comprises 616 residues: FNIP repeat-containing protein DDB_G0290639 (616 aa).

The stretch at 239-274 forms a coiled coil; the sequence is FENNNNNNNNNNNNNNNNNNNNNNNNNNNNNKKTEK. The span at 241 to 269 shows a compositional bias: low complexity; sequence NNNNNNNNNNNNNNNNNNNNNNNNNNNNN. The interval 241 to 270 is disordered; sequence NNNNNNNNNNNNNNNNNNNNNNNNNNNNNK. 6 FNIP repeats span residues 337-379, 380-421, 423-464, 466-508, 509-550, and 552-593; these read FEES…FNDG, FNQS…KLCN, FSQP…VFYD, FNQL…FSDG, FNQT…LIDS, and FQQP…ILDK.

This chain is FNIP repeat-containing protein DDB_G0290639, found in Dictyostelium discoideum (Social amoeba).